An 853-amino-acid polypeptide reads, in one-letter code: Guanine nucleotide exchange protein smcr8a (853 aa).

The region spanning 47–219 is the uDENN FLCN/SMCR8-type domain; sequence TSYAKFSKDF…KETELQKMNN (173 aa). Disordered stretches follow at residues 272–298 and 418–454; these read PVMDETLKDTNPSDSAENTVETESRKS and LKPGVESGEGPPESSTSDITQETSEAADTETKGSFSS. Positions 280–298 are enriched in polar residues; it reads DTNPSDSAENTVETESRKS. The region spanning 316–753 is the cDENN FLCN/SMCR8-type domain; sequence RLKTLEELCD…LISHLADHRT (438 aa). A compositionally biased stretch (low complexity) spans 421–432; sequence GVESGEGPPESS. The segment covering 433-454 has biased composition (polar residues); sequence TSDITQETSEAADTETKGSFSS. Residues 762–826 enclose the dDENN FLCN/SMCR8-type domain; the sequence is FLHIQGMLTQ…IIQYLSELIK (65 aa).

Belongs to the SMCR8 family. In terms of assembly, component of the C9orf72-SMCR8 complex. The C9orf72-SMCR8 complex associates with the ATG1/ULK1 kinase complex.

It is found in the cytoplasm. It localises to the nucleus. Functionally, component of the C9orf72-SMCR8 complex, a complex that has guanine nucleotide exchange factor (GEF) activity and regulates autophagy. In the complex, C9orf72 and SMCR8 probably constitute the catalytic subunits that promote the exchange of GDP to GTP, converting inactive GDP-bound RAB8A and RAB39B into their active GTP-bound form, thereby promoting autophagosome maturation. The C9orf72-SMCR8 complex also acts as a negative regulator of autophagy initiation by interacting with the ATG1/ULK1 kinase complex and inhibiting its protein kinase activity. This chain is Guanine nucleotide exchange protein smcr8a (smcr8a), found in Danio rerio (Zebrafish).